We begin with the raw amino-acid sequence, 512 residues long: Protein maph-9 (512 aa).

Disordered regions lie at residues 24-103 (ISRK…DDDF), 168-386 (DLSE…KNEK), and 481-512 (GNRL…RPFR). Low complexity-rich tracts occupy residues 30 to 39 (TTTTSSGSSG) and 78 to 95 (STLS…STAA). Over residues 178–200 (TDHEDPSLTFRVDKELEQSESKK) the composition is skewed to basic and acidic residues. Residues 230–239 (PQTSANLSTK) are compositionally biased toward polar residues. Composition is skewed to basic and acidic residues over residues 260–302 (KPSD…RENS) and 310–386 (VQDH…KNEK). Residues 267–429 (KEWLQKKERE…QLEESEKMTR (163 aa)) are a coiled coil. The span at 502–512 (PGTTTSLRPFR) shows a compositional bias: polar residues.

As to expression, expressed in amphid and phasmid ciliated neurons.

The protein localises to the cell projection. Its subcellular location is the cilium. The protein resides in the cytoplasm. It localises to the cytoskeleton. It is found in the cilium axoneme. The chain is Protein maph-9 from Caenorhabditis elegans.